The chain runs to 186 residues: dTTP/UTP pyrophosphatase (186 aa).

The Proton acceptor role is filled by Asp66.

This sequence belongs to the Maf family. YhdE subfamily. Requires a divalent metal cation as cofactor.

It is found in the cytoplasm. The enzyme catalyses dTTP + H2O = dTMP + diphosphate + H(+). It catalyses the reaction UTP + H2O = UMP + diphosphate + H(+). Its function is as follows. Nucleoside triphosphate pyrophosphatase that hydrolyzes dTTP and UTP. May have a dual role in cell division arrest and in preventing the incorporation of modified nucleotides into cellular nucleic acids. The polypeptide is dTTP/UTP pyrophosphatase (Pyrococcus horikoshii (strain ATCC 700860 / DSM 12428 / JCM 9974 / NBRC 100139 / OT-3)).